The sequence spans 247 residues: Adenosylcobinamide-GDP ribazoletransferase (247 aa).

Transmembrane regions (helical) follow at residues 34–54, 59–79, 113–133, 138–158, 171–191, and 194–214; these read IVMF…IFIL, CGIP…TGGF, GGLA…ELAL, MLAA…LLMY, VFIG…AVIV, and VLLP…AIFI.

It belongs to the CobS family. It depends on Mg(2+) as a cofactor.

Its subcellular location is the cell inner membrane. It carries out the reaction alpha-ribazole + adenosylcob(III)inamide-GDP = adenosylcob(III)alamin + GMP + H(+). The enzyme catalyses alpha-ribazole 5'-phosphate + adenosylcob(III)inamide-GDP = adenosylcob(III)alamin 5'-phosphate + GMP + H(+). The protein operates within cofactor biosynthesis; adenosylcobalamin biosynthesis; adenosylcobalamin from cob(II)yrinate a,c-diamide: step 7/7. Joins adenosylcobinamide-GDP and alpha-ribazole to generate adenosylcobalamin (Ado-cobalamin). Also synthesizes adenosylcobalamin 5'-phosphate from adenosylcobinamide-GDP and alpha-ribazole 5'-phosphate. This chain is Adenosylcobinamide-GDP ribazoletransferase, found in Salmonella schwarzengrund (strain CVM19633).